The following is a 380-amino-acid chain: Methenyltetrahydrofolate synthase domain-containing protein (380 aa).

A compositionally biased stretch (basic and acidic residues) spans 245–258; sequence EEQAGKDVTLRDGP. Disordered stretches follow at residues 245 to 283 and 361 to 380; these read EEQA…PLSS and LVGS…IAGP. An RRM domain is found at 282 to 355; the sequence is SSVQIGNLPR…NTVRVVLARQ (74 aa).

This is Methenyltetrahydrofolate synthase domain-containing protein (MTHFSD) from Bos taurus (Bovine).